The primary structure comprises 192 residues: Pyridoxine/pyridoxamine 5'-phosphate oxidase (192 aa).

FMN contacts are provided by residues 41–46 (RMMLLK), 56–57 (FT), Arg62, Lys63, and Gln85. Substrate is bound at residue Lys46. Substrate contacts are provided by Tyr103, Arg107, and Ser111. FMN-binding positions include 120 to 121 (QS) and Trp165. Residue 171–173 (RLH) participates in substrate binding. Arg175 contributes to the FMN binding site.

The protein belongs to the pyridoxamine 5'-phosphate oxidase family. In terms of assembly, homodimer. It depends on FMN as a cofactor.

The enzyme catalyses pyridoxamine 5'-phosphate + O2 + H2O = pyridoxal 5'-phosphate + H2O2 + NH4(+). It carries out the reaction pyridoxine 5'-phosphate + O2 = pyridoxal 5'-phosphate + H2O2. The protein operates within cofactor metabolism; pyridoxal 5'-phosphate salvage; pyridoxal 5'-phosphate from pyridoxamine 5'-phosphate: step 1/1. It participates in cofactor metabolism; pyridoxal 5'-phosphate salvage; pyridoxal 5'-phosphate from pyridoxine 5'-phosphate: step 1/1. In terms of biological role, catalyzes the oxidation of either pyridoxine 5'-phosphate (PNP) or pyridoxamine 5'-phosphate (PMP) into pyridoxal 5'-phosphate (PLP). This is Pyridoxine/pyridoxamine 5'-phosphate oxidase from Zymomonas mobilis subsp. mobilis (strain ATCC 31821 / ZM4 / CP4).